The following is a 99-amino-acid chain: Large ribosomal subunit protein uL23 (99 aa).

It belongs to the universal ribosomal protein uL23 family. As to quaternary structure, part of the 50S ribosomal subunit. Contacts protein L29, and trigger factor when it is bound to the ribosome.

One of the early assembly proteins it binds 23S rRNA. One of the proteins that surrounds the polypeptide exit tunnel on the outside of the ribosome. Forms the main docking site for trigger factor binding to the ribosome. This is Large ribosomal subunit protein uL23 from Rhodopseudomonas palustris (strain BisB5).